A 730-amino-acid polypeptide reads, in one-letter code: Catalase-peroxidase (730 aa).

Residues 95–218 (WHSAGTYRVG…LAAVQMGLIY (124 aa)) constitute a cross-link (tryptophyl-tyrosyl-methioninium (Trp-Tyr) (with M-244)). The active-site Proton acceptor is the histidine 96. The segment at residues 218–244 (YVNPEGPNGNPDPLGSAHDVRETFARM) is a cross-link (tryptophyl-tyrosyl-methioninium (Tyr-Met) (with W-95)). A heme b-binding site is contributed by histidine 259.

It belongs to the peroxidase family. Peroxidase/catalase subfamily. As to quaternary structure, homodimer or homotetramer. Requires heme b as cofactor. Post-translationally, formation of the three residue Trp-Tyr-Met cross-link is important for the catalase, but not the peroxidase activity of the enzyme.

The catalysed reaction is H2O2 + AH2 = A + 2 H2O. It catalyses the reaction 2 H2O2 = O2 + 2 H2O. In terms of biological role, bifunctional enzyme with both catalase and broad-spectrum peroxidase activity. The sequence is that of Catalase-peroxidase from Clostridium botulinum (strain Eklund 17B / Type B).